Consider the following 81-residue polypeptide: Photosystem I iron-sulfur center (81 aa).

4Fe-4S ferredoxin-type domains follow at residues 2–31 (AHTV…MVPW) and 37–68 (GQIA…IRVY). Residues Cys11, Cys14, Cys17, Cys21, Cys48, Cys51, Cys54, and Cys58 each contribute to the [4Fe-4S] cluster site.

The cyanobacterial PSI reaction center is composed of one copy each of PsaA,B,C,D,E,F,I,J,K,L,M and X, and forms trimeric complexes. The cofactor is [4Fe-4S] cluster.

The protein localises to the cellular thylakoid membrane. It carries out the reaction reduced [plastocyanin] + hnu + oxidized [2Fe-2S]-[ferredoxin] = oxidized [plastocyanin] + reduced [2Fe-2S]-[ferredoxin]. Apoprotein for the two 4Fe-4S centers FA and FB of photosystem I (PSI); essential for photochemical activity. FB is the terminal electron acceptor of PSI, donating electrons to ferredoxin. The C-terminus interacts with PsaA/B/D and helps assemble the protein into the PSI complex. Required for binding of PsaD and PsaE to PSI. PSI is a plastocyanin/cytochrome c6-ferredoxin oxidoreductase, converting photonic excitation into a charge separation, which transfers an electron from the donor P700 chlorophyll pair to the spectroscopically characterized acceptors A0, A1, FX, FA and FB in turn. The polypeptide is Photosystem I iron-sulfur center (psaC) (Synechococcus elongatus).